Reading from the N-terminus, the 237-residue chain is 6-carboxyhexanoate--CoA ligase (237 aa).

The protein belongs to the BioW family. In terms of assembly, homodimer. It depends on Mg(2+) as a cofactor.

It carries out the reaction heptanedioate + ATP + CoA = 6-carboxyhexanoyl-CoA + AMP + diphosphate. The protein operates within metabolic intermediate metabolism; pimeloyl-CoA biosynthesis; pimeloyl-CoA from pimelate: step 1/1. Functionally, catalyzes the transformation of pimelate into pimeloyl-CoA with concomitant hydrolysis of ATP to AMP. This is 6-carboxyhexanoate--CoA ligase from Methanocaldococcus jannaschii (strain ATCC 43067 / DSM 2661 / JAL-1 / JCM 10045 / NBRC 100440) (Methanococcus jannaschii).